A 273-amino-acid chain; its full sequence is Undecaprenyl-diphosphatase (273 aa).

Transmembrane regions (helical) follow at residues 45–65, 90–110, 116–136, 154–173, 190–210, 222–242, and 252–272; these read AKTF…VMFW, LTLI…LIFH, LFNP…LIAA, YRQA…PGFS, YAAS…ATAL, ADFP…LVAI, and ISFI…YVVF.

The protein belongs to the UppP family.

The protein resides in the cell inner membrane. The enzyme catalyses di-trans,octa-cis-undecaprenyl diphosphate + H2O = di-trans,octa-cis-undecaprenyl phosphate + phosphate + H(+). Functionally, catalyzes the dephosphorylation of undecaprenyl diphosphate (UPP). Confers resistance to bacitracin. The protein is Undecaprenyl-diphosphatase of Enterobacter sp. (strain 638).